A 211-amino-acid polypeptide reads, in one-letter code: ATP phosphoribosyltransferase (211 aa).

Belongs to the ATP phosphoribosyltransferase family. Short subfamily. As to quaternary structure, heteromultimer composed of HisG and HisZ subunits.

The protein resides in the cytoplasm. It carries out the reaction 1-(5-phospho-beta-D-ribosyl)-ATP + diphosphate = 5-phospho-alpha-D-ribose 1-diphosphate + ATP. The protein operates within amino-acid biosynthesis; L-histidine biosynthesis; L-histidine from 5-phospho-alpha-D-ribose 1-diphosphate: step 1/9. Its function is as follows. Catalyzes the condensation of ATP and 5-phosphoribose 1-diphosphate to form N'-(5'-phosphoribosyl)-ATP (PR-ATP). Has a crucial role in the pathway because the rate of histidine biosynthesis seems to be controlled primarily by regulation of HisG enzymatic activity. This is ATP phosphoribosyltransferase from Pseudomonas putida (strain W619).